The following is a 78-amino-acid chain: MSRVCQVTGKRPQVGNNVSHAHNKTRRRFLPNLHNHRFWVESENRFVRLRVSTKGMRIIDKHGIDKVLADLRAKGEKV.

It belongs to the bacterial ribosomal protein bL28 family.

In Psychrobacter sp. (strain PRwf-1), this protein is Large ribosomal subunit protein bL28.